Here is a 368-residue protein sequence, read N- to C-terminus: MLYYLLKYINDVFDPPGFGVIEFLTFRASAAAITALLISLMAGPWFIRYLKGRFIEPVKEEAPPEHKKKKELPTMGGILIIFSIEVSVFLWAKFDDPHVWLVMLAIFWMGLIGFIDDYRKVVLKIKGGLSARYKLLGQISLGLVIGLYTWFDPAFAVLLSKTTIPFIKQLSIDYGIFYIPIVIFIITAVSNSVNLTDGLDGLASGTTAIVVSALGAFSYLAGNAVYADYLKIPFIPGGGEIAVVCMAIVMACVGFLWFNSNPAEIIMGDTGSLALGSAVAVIALLIKQELLLPVLAGVFVLEALSVSMQVLYFKLTKKLSGQGRRIFLMAPLHHHFQLKGWAEQKIVIRFWIISILFFLTSLMTLKLR.

9 helical membrane-spanning segments follow: residues 30-50 (AAAITALLISLMAGPWFIRYL), 72-92 (LPTMGGILIIFSIEVSVFLWA), 98-118 (HVWLVMLAIFWMGLIGFIDDY), 139-159 (ISLGLVIGLYTWFDPAFAVLL), 170-190 (LSIDYGIFYIPIVIFIITAVS), 201-221 (GLASGTTAIVVSALGAFSYLA), 238-258 (GGEIAVVCMAIVMACVGFLWF), 264-286 (EIIMGDTGSLALGSAVAVIALLI), and 345-365 (KIVIRFWIISILFFLTSLMTL).

Belongs to the glycosyltransferase 4 family. MraY subfamily. The cofactor is Mg(2+).

Its subcellular location is the cell inner membrane. The catalysed reaction is UDP-N-acetyl-alpha-D-muramoyl-L-alanyl-gamma-D-glutamyl-meso-2,6-diaminopimeloyl-D-alanyl-D-alanine + di-trans,octa-cis-undecaprenyl phosphate = di-trans,octa-cis-undecaprenyl diphospho-N-acetyl-alpha-D-muramoyl-L-alanyl-D-glutamyl-meso-2,6-diaminopimeloyl-D-alanyl-D-alanine + UMP. It functions in the pathway cell wall biogenesis; peptidoglycan biosynthesis. In terms of biological role, catalyzes the initial step of the lipid cycle reactions in the biosynthesis of the cell wall peptidoglycan: transfers peptidoglycan precursor phospho-MurNAc-pentapeptide from UDP-MurNAc-pentapeptide onto the lipid carrier undecaprenyl phosphate, yielding undecaprenyl-pyrophosphoryl-MurNAc-pentapeptide, known as lipid I. This chain is Phospho-N-acetylmuramoyl-pentapeptide-transferase, found in Chlorobium phaeobacteroides (strain DSM 266 / SMG 266 / 2430).